Here is a 446-residue protein sequence, read N- to C-terminus: MAPNTSTMDEAGLPAERDFSFRILTACFLSLLILSTLLGNTLVCAAVIRFRHLRSKVTNFFVISLAVSDLLVAVLVMPWKAVAEIAGFWPLGPFCNIWVAFDIMCSTASILNLCVISVDRYWAISSPFQYERKMTPKAAFILISVAWTLSVLISFIPVQLSWHKAKPTWPLDGNFTSLEDTEDDNCDTRLSRTYAISSSLISFYIPVAIMIVTYTSIYRIAQKQIRRISALERAAVHAKNCQTTAGNGNPVECAQSESSFKMSFKRETKVLKTLSVIMGVFVCCWLPFFISNCMVPFCGSEETQPFCIDSITFDVFVWFGWANSSLNPIIYAFNADFQKAFSTLLGCYRLCPTTNNAIETVSINNNGAVVFSSHHEPRGSISKDCNLVYLIPHAVGSSEDLKKEEAGGIAKPLEKLSPALSVILDYDTDVSLEKIQPVTHSGQHST.

Over 1–22 (MAPNTSTMDEAGLPAERDFSFR) the chain is Extracellular. The N-linked (GlcNAc...) asparagine glycan is linked to Asn-4. Residues 23-48 (ILTACFLSLLILSTLLGNTLVCAAVI) traverse the membrane as a helical segment. The Cytoplasmic portion of the chain corresponds to 49–59 (RFRHLRSKVTN). A helical membrane pass occupies residues 60-86 (FFVISLAVSDLLVAVLVMPWKAVAEIA). Residues 87–95 (GFWPLGPFC) are Extracellular-facing. The cysteines at positions 95 and 186 are disulfide-linked. A helical transmembrane segment spans residues 96-118 (NIWVAFDIMCSTASILNLCVISV). The Cytoplasmic portion of the chain corresponds to 119–137 (DRYWAISSPFQYERKMTPK). Residues 138–162 (AAFILISVAWTLSVLISFIPVQLSW) traverse the membrane as a helical segment. At 163 to 192 (HKAKPTWPLDGNFTSLEDTEDDNCDTRLSR) the chain is on the extracellular side. The chain crosses the membrane as a helical span at residues 193-218 (TYAISSSLISFYIPVAIMIVTYTSIY). The Cytoplasmic portion of the chain corresponds to 219–272 (RIAQKQIRRISALERAAVHAKNCQTTAGNGNPVECAQSESSFKMSFKRETKVLK). Residues 273–299 (TLSVIMGVFVCCWLPFFISNCMVPFCG) traverse the membrane as a helical segment. Residues 300–312 (SEETQPFCIDSIT) are Extracellular-facing. A helical membrane pass occupies residues 313 to 337 (FDVFVWFGWANSSLNPIIYAFNADF). The Cytoplasmic portion of the chain corresponds to 338 to 446 (QKAFSTLLGC…PVTHSGQHST (109 aa)). Residues Cys-347 and Cys-351 are each lipidated (S-palmitoyl cysteine).

This sequence belongs to the G-protein coupled receptor 1 family. In terms of assembly, interacts with DNAJC14 via its C-terminus PubMed:11331877. Interacts with DRD2. Interacts with DORIP1. N-glycosylated. Brain, in the striatum, the nucleus accumbens, and the olfactory tubercle.

It is found in the cell membrane. It localises to the endoplasmic reticulum membrane. The protein localises to the cell projection. Its subcellular location is the dendrite. The protein resides in the cilium membrane. It is found in the dendritic spine. Dopamine receptor whose activity is mediated by G proteins which activate adenylyl cyclase. The chain is D(1A) dopamine receptor (Drd1) from Rattus norvegicus (Rat).